A 104-amino-acid chain; its full sequence is uncharacterized protein (104 aa).

Basic and acidic residues predominate over residues 58-71 (PERDRARRDRDHHP). A disordered region spans residues 58-84 (PERDRARRDRDHHPWSRSRSQLSPRMA).

This is an uncharacterized protein from Mycobacterium tuberculosis (strain ATCC 25618 / H37Rv).